We begin with the raw amino-acid sequence, 223 residues long: Small ribosomal subunit protein uS3 (223 aa).

One can recognise a KH type-2 domain in the interval 39–108 (IRNFVKKNSY…NILINIVEVK (70 aa)).

The protein belongs to the universal ribosomal protein uS3 family. Part of the 30S ribosomal subunit. Forms a tight complex with proteins S10 and S14.

Functionally, binds the lower part of the 30S subunit head. Binds mRNA in the 70S ribosome, positioning it for translation. The polypeptide is Small ribosomal subunit protein uS3 (Clostridium botulinum (strain Kyoto / Type A2)).